We begin with the raw amino-acid sequence, 345 residues long: Dense granule protein 4 (345 aa).

The signal sequence occupies residues 1–20 (MQGTWFSLFVVVMVSHLACG). Polar residues predominate over residues 227–251 (SVSVSTEDSGLTGVKDSSSSESTVT). The segment at 227–271 (SVSVSTEDSGLTGVKDSSSSESTVTPADEAASESEEGDKTSRKSK) is disordered. Residues 276 to 296 (ILTGLGVAATLAAAAAAAKAV) form a helical membrane-spanning segment. The tract at residues 298 to 345 (GFGGTRTSTAPAEAGKTELDDGYRPPPFNPRPSPYAELLKDLERMRKE) is disordered. Residues 321–330 (RPPPFNPRPS) are compositionally biased toward pro residues. Residues 335 to 345 (LLKDLERMRKE) are compositionally biased toward basic and acidic residues.

O-glycosylated.

Its subcellular location is the secreted. The protein localises to the parasitophorous vacuole lumen. It is found in the parasitophorous vacuole membrane. The protein resides in the cytoplasmic vesicle. It localises to the secretory vesicle. Its function is as follows. Major granular component involved in excreted-secreted antigen (ESA) immunity. This Toxoplasma gondii protein is Dense granule protein 4 (GRA4).